Here is a 559-residue protein sequence, read N- to C-terminus: Hepatocyte nuclear factor 1-alpha (559 aa).

The 32-residue stretch at 13–44 folds into the HNF-p1 domain; it reads GPGRLSALQEQLIWALLGSGLSREVLVHALGE. Positions 14–43 are dimerization; that stretch reads PGRLSALQEQLIWALLGSGLSREVLVHALG. Over residues 49–62 the composition is skewed to basic and acidic residues; that stretch reads RVTPGAEKGDRGDG. Residues 49 to 73 are disordered; sequence RVTPGAEKGDRGDGESSEEGEMDFP. Residues 78–173 form the POU-specific atypical domain; that stretch reads QELEALAPEE…ISQQFTNARH (96 aa). Interaction with DNA regions lie at residues 121 to 123, 134 to 140, 146 to 149, 192 to 195, 252 to 254, and 259 to 262; these read QRE, HLSQHLN, KNQK, RFKW, RVY, and NRRK. The Nuclear localization signal motif lies at 186–194; that stretch reads RKGRRNRFK. Positions 188-268 form a DNA-binding region, homeobox; HNF1-type; it reads GRRNRFKWGP…NRRKEEAFRH (81 aa). Positions 492 to 559 are disordered; sequence TDPEEQTDQP…IPAQMVSTAQ (68 aa). Positions 499 to 522 are enriched in polar residues; that stretch reads DQPIQEDSLHLQSPSPVPVSSGNL.

The protein belongs to the HNF1 homeobox family. In terms of assembly, binds DNA as a dimer. Expressed in liver, intestine, spleen and kidney.

The protein resides in the nucleus. In terms of biological role, transcriptional activator that regulates the tissue specific expression of multiple genes, especially in pancreas and liver. Binds to the promoter of the albumin gene. The polypeptide is Hepatocyte nuclear factor 1-alpha (hnf1a) (Salmo salar (Atlantic salmon)).